Reading from the N-terminus, the 483-residue chain is Ankyrin repeat domain-containing protein M-T5 (483 aa).

ANK repeat units lie at residues 32–63 (SRDTPFRLYLTRYDCTPEGLRLFLTRGADVNG), 67–101 (SRTSPLCTVLSNKDLGNEAEALAKQLIDAGADVNA), 105–137 (DGRYPLLCLLENDRINTARFVRYMIDRGTSVYV), 177–210 (YGFNVLQCYMIAHVRSSNVQILRFLLRHGVDSSR), 250–279 (LDFTPINYCVIHNDRRTFDYLLERGADPNV), and 283–312 (LGNSCLDLAVLNGNKYMVHRLLRKTITPDA). The tract at residues 390-478 (VSVFDTAFGL…LTDDEIHDLF (89 aa)) is PRANC/F-box-like.

As to quaternary structure, interacts (via PRANC/F-box-like domain) with the SKP1 component of the host SCF ubiquitin ligase complex. Interacts (via N-terminus) with host AKT1.

Substrate-specific adapter of SKP1-containing E3 ubiquitin-protein ligases which mediate the ubiquitination and subsequent proteasomal degradation of host target proteins including CDKN1B. Disappearance of host CDKN1B correlates with cell cycle progression through the G0/G1 checkpoint. Therefore, viruses in infected cells are protected from diverse innate host antiviral responses normally triggered by G0/G1 cell cycle arrest. This chain is Ankyrin repeat domain-containing protein M-T5 (m005R), found in Myxoma virus (strain Lausanne) (MYXV).